We begin with the raw amino-acid sequence, 151 residues long: Large ribosomal subunit protein bL9 (151 aa).

It belongs to the bacterial ribosomal protein bL9 family.

In terms of biological role, binds to the 23S rRNA. This is Large ribosomal subunit protein bL9 from Bordetella petrii (strain ATCC BAA-461 / DSM 12804 / CCUG 43448).